A 380-amino-acid chain; its full sequence is Succinate--CoA ligase [ADP-forming] subunit beta 2 (380 aa).

An ATP-grasp domain is found at 9–235 (KQIFSKHGIR…YTEADQMERI (227 aa)). ATP-binding positions include lysine 45, 52-54 (GRG), glutamate 91, isoleucine 94, and glutamate 99. Asparagine 191 and aspartate 204 together coordinate Mg(2+). Substrate contacts are provided by residues asparagine 255 and 312-314 (GIT).

The protein belongs to the succinate/malate CoA ligase beta subunit family. In terms of assembly, heterotetramer of two alpha and two beta subunits. It depends on Mg(2+) as a cofactor.

It catalyses the reaction succinate + ATP + CoA = succinyl-CoA + ADP + phosphate. It carries out the reaction GTP + succinate + CoA = succinyl-CoA + GDP + phosphate. It participates in carbohydrate metabolism; tricarboxylic acid cycle; succinate from succinyl-CoA (ligase route): step 1/1. Functionally, succinyl-CoA synthetase functions in the citric acid cycle (TCA), coupling the hydrolysis of succinyl-CoA to the synthesis of either ATP or GTP and thus represents the only step of substrate-level phosphorylation in the TCA. The beta subunit provides nucleotide specificity of the enzyme and binds the substrate succinate, while the binding sites for coenzyme A and phosphate are found in the alpha subunit. The protein is Succinate--CoA ligase [ADP-forming] subunit beta 2 of Archaeoglobus fulgidus (strain ATCC 49558 / DSM 4304 / JCM 9628 / NBRC 100126 / VC-16).